Consider the following 146-residue polypeptide: Hemoglobin subunit beta (146 aa).

Residues 2-146 (FLTAEEKSLV…VANALAHKYH (145 aa)) form the Globin domain. Serine 44 carries the phosphoserine modification. Lysine 59 bears the N6-acetyllysine mark. Heme b is bound at residue histidine 63. Residue lysine 82 is modified to N6-acetyllysine. Histidine 92 is a binding site for heme b. An S-nitrosocysteine modification is found at cysteine 93. Lysine 144 carries the post-translational modification N6-acetyllysine.

It belongs to the globin family. As to quaternary structure, heterotetramer of two alpha chains and two beta chains. Red blood cells.

Its function is as follows. Involved in oxygen transport from the lung to the various peripheral tissues. In Proteles cristata (Aardwolf), this protein is Hemoglobin subunit beta (HBB).